The chain runs to 556 residues: Formate--tetrahydrofolate ligase (556 aa).

Thr-65–Thr-72 is a binding site for ATP.

It belongs to the formate--tetrahydrofolate ligase family.

It carries out the reaction (6S)-5,6,7,8-tetrahydrofolate + formate + ATP = (6R)-10-formyltetrahydrofolate + ADP + phosphate. Its pathway is one-carbon metabolism; tetrahydrofolate interconversion. The chain is Formate--tetrahydrofolate ligase from Kosmotoga olearia (strain ATCC BAA-1733 / DSM 21960 / TBF 19.5.1).